A 309-amino-acid chain; its full sequence is Ecto-ADP-ribosyltransferase 5 (309 aa).

Residues 1–23 form the signal peptide; sequence MILEDLLMVLSCLSLHALWKVRA. Cysteine 43 and cysteine 259 are joined by a disulfide. The region spanning 63–253 is the TR mART core domain; the sequence is ALLRESWEAA…IVTLWSYDQT (191 aa). Position 100 (tyrosine 100) interacts with NAD(+). Asparagine 102 carries an N-linked (GlcNAc...) asparagine glycan. NAD(+) contacts are provided by arginine 161 and glutamine 181. Residue arginine 161 is part of the active site. Serine 184 is a catalytic residue. Asparagine 197 carries an N-linked (GlcNAc...) asparagine glycan. Serine 215 provides a ligand contact to NAD(+). Glutamate 222 is an active-site residue.

It belongs to the Arg-specific ADP-ribosyltransferase family. As to expression, abundantly expressed in testis. Lower levels in cardiac and skeletal muscle.

Its subcellular location is the secreted. The protein resides in the membrane. It carries out the reaction L-arginyl-[protein] + NAD(+) = N(omega)-(ADP-D-ribosyl)-L-arginyl-[protein] + nicotinamide + H(+). The polypeptide is Ecto-ADP-ribosyltransferase 5 (Art5) (Mus musculus (Mouse)).